The following is a 94-amino-acid chain: Co-chaperonin GroES (94 aa).

Belongs to the GroES chaperonin family. As to quaternary structure, heptamer of 7 subunits arranged in a ring. Interacts with the chaperonin GroEL.

The protein localises to the cytoplasm. Its function is as follows. Together with the chaperonin GroEL, plays an essential role in assisting protein folding. The GroEL-GroES system forms a nano-cage that allows encapsulation of the non-native substrate proteins and provides a physical environment optimized to promote and accelerate protein folding. GroES binds to the apical surface of the GroEL ring, thereby capping the opening of the GroEL channel. The chain is Co-chaperonin GroES from Orientia tsutsugamushi (Rickettsia tsutsugamushi).